The sequence spans 414 residues: Schlafen-like protein 1 (414 aa).

Residues 141-203 are disordered; sequence LHHREQDDSG…ISQNRPSGVR (63 aa). Residues 154-185 show a composition bias toward pro residues; the sequence is SHSPGPSPGPSPGPSPGFRRPPLPQLADPPPN. 268 to 275 is an ATP binding site; the sequence is GVEDSGLV. Residues 373 to 407 adopt a coiled-coil conformation; that stretch reads RQKWTAELSKLEEKVDVLTLEKEQLQEQLRQRQTL.

This sequence belongs to the Schlafen family. Subgroup I subfamily.

In Rattus norvegicus (Rat), this protein is Schlafen-like protein 1 (Slfnl1).